The chain runs to 120 residues: MDSCSSTPFVTGVLLPSAVFSFLFCTLVSSSFGLDEFNLTTCGIRGTLKMQFLKFLENTLIFLGSGNLTAHIGILVMKNDLSNSRIWRFTGGLYGNTPDILHELINLLNFWNTGSAIFMQ.

2 helical membrane passes run 8–28 (PFVTGVLLPSAVFSFLFCTLV) and 55–75 (FLENTLIFLGSGNLTAHIGIL).

It localises to the membrane. This is an uncharacterized protein from Saccharomyces cerevisiae (strain ATCC 204508 / S288c) (Baker's yeast).